The primary structure comprises 399 residues: Glutamine synthetase 1, mitochondrial (399 aa).

The transit peptide at 1 to 27 (MALRVAGLFLKKELVAPATQQLRLLRT) directs the protein to the mitochondrion. The GS beta-grasp domain occupies 62–143 (VQATYLWIDG…VLCDTYSADG (82 aa)). The region spanning 150–399 (KRAAFQAAID…AIVRTCLLNE (250 aa)) is the GS catalytic domain.

It belongs to the glutamine synthetase family. As to quaternary structure, homooctamer.

It localises to the mitochondrion. The enzyme catalyses L-glutamate + NH4(+) + ATP = L-glutamine + ADP + phosphate + H(+). This is Glutamine synthetase 1, mitochondrial (Gs1) from Drosophila melanogaster (Fruit fly).